The primary structure comprises 1221 residues: Deubiquitinating protein VCPIP1 (1221 aa).

Residues M1 to A19 show a composition bias toward pro residues. The disordered stretch occupies residues M1 to D40. Residues L207–I360 form the OTU domain. D215 is a catalytic residue. C218 serves as the catalytic Nucleophile. H353 is a catalytic residue. Residue K407 is modified to N6-acetyllysine. Disordered stretches follow at residues S724–I778 and E988–G1009. Residues S746 and S756 each carry the phosphoserine modification. Over residues P754–T770 the composition is skewed to low complexity. T762 carries the phosphothreonine modification. A phosphoserine mark is found at S767, S993, S997, and S1076. 2 disordered regions span residues A1117 to R1177 and R1189 to S1221. Residues V1143–L1156 show a composition bias toward polar residues. Low complexity predominate over residues L1162–T1173. A phosphoserine mark is found at S1197 and S1206. Residues M1198–D1208 show a composition bias toward acidic residues. The span at A1209–S1221 shows a compositional bias: polar residues.

Binds VCP and the ternary complex containing STX5A, NSFL1C and VCP. In terms of processing, phosphorylated at Ser-1206 by ATM or ATR following induction of covalent DNA-protein cross-links (DPCs). In terms of tissue distribution, widely expressed.

It is found in the nucleus. Its subcellular location is the cytoplasm. The protein localises to the endoplasmic reticulum. It localises to the golgi apparatus. The protein resides in the golgi stack. It carries out the reaction Thiol-dependent hydrolysis of ester, thioester, amide, peptide and isopeptide bonds formed by the C-terminal Gly of ubiquitin (a 76-residue protein attached to proteins as an intracellular targeting signal).. In terms of biological role, deubiquitinating enzyme involved in DNA repair and reassembly of the Golgi apparatus and the endoplasmic reticulum following mitosis. Necessary for VCP-mediated reassembly of Golgi stacks after mitosis. Plays a role in VCP-mediated formation of transitional endoplasmic reticulum (tER). Mediates dissociation of the ternary complex containing STX5A, NSFL1C and VCP. Also involved in DNA repair following phosphorylation by ATM or ATR: acts by catalyzing deubiquitination of SPRTN, thereby promoting SPRTN recruitment to chromatin and subsequent proteolytic cleavage of covalent DNA-protein cross-links (DPCs). Hydrolyzes 'Lys-11'- and 'Lys-48'-linked polyubiquitin chains. The sequence is that of Deubiquitinating protein VCPIP1 from Rattus norvegicus (Rat).